Here is a 514-residue protein sequence, read N- to C-terminus: 2-isopropylmalate synthase (514 aa).

The region spanning 5–268 (LIIFDTTLRD…DVGLDTTQIV (264 aa)) is the Pyruvate carboxyltransferase domain. Residues aspartate 14, histidine 202, histidine 204, and asparagine 239 each coordinate Mn(2+). Residues 395–514 (KFVSLSQRSE…KDDKLNPQRS (120 aa)) are regulatory domain.

Belongs to the alpha-IPM synthase/homocitrate synthase family. LeuA type 1 subfamily. Homodimer. Mn(2+) is required as a cofactor.

It is found in the cytoplasm. It catalyses the reaction 3-methyl-2-oxobutanoate + acetyl-CoA + H2O = (2S)-2-isopropylmalate + CoA + H(+). The protein operates within amino-acid biosynthesis; L-leucine biosynthesis; L-leucine from 3-methyl-2-oxobutanoate: step 1/4. In terms of biological role, catalyzes the condensation of the acetyl group of acetyl-CoA with 3-methyl-2-oxobutanoate (2-ketoisovalerate) to form 3-carboxy-3-hydroxy-4-methylpentanoate (2-isopropylmalate). The chain is 2-isopropylmalate synthase from Burkholderia ambifaria (strain ATCC BAA-244 / DSM 16087 / CCUG 44356 / LMG 19182 / AMMD) (Burkholderia cepacia (strain AMMD)).